We begin with the raw amino-acid sequence, 280 residues long: 4-diphosphocytidyl-2-C-methyl-D-erythritol kinase (280 aa).

K8 is an active-site residue. 91–101 lines the ATP pocket; sequence PVAAGLAGGST. The active site involves D133.

Belongs to the GHMP kinase family. IspE subfamily.

It carries out the reaction 4-CDP-2-C-methyl-D-erythritol + ATP = 4-CDP-2-C-methyl-D-erythritol 2-phosphate + ADP + H(+). It participates in isoprenoid biosynthesis; isopentenyl diphosphate biosynthesis via DXP pathway; isopentenyl diphosphate from 1-deoxy-D-xylulose 5-phosphate: step 3/6. Functionally, catalyzes the phosphorylation of the position 2 hydroxy group of 4-diphosphocytidyl-2C-methyl-D-erythritol. This is 4-diphosphocytidyl-2-C-methyl-D-erythritol kinase from Clostridium botulinum (strain 657 / Type Ba4).